Consider the following 698-residue polypeptide: Ion-translocating oxidoreductase complex subunit C (698 aa).

4Fe-4S ferredoxin-type domains follow at residues 366–397 (TEMG…QQLY) and 407–436 (KARN…VQYY). 8 residues coordinate [4Fe-4S] cluster: C377, C380, C383, C387, C416, C419, C422, and C426.

Belongs to the 4Fe4S bacterial-type ferredoxin family. RnfC subfamily. The complex is composed of six subunits: RnfA, RnfB, RnfC, RnfD, RnfE and RnfG. [4Fe-4S] cluster serves as cofactor.

The protein resides in the cell inner membrane. In terms of biological role, part of a membrane-bound complex that couples electron transfer with translocation of ions across the membrane. This Yersinia pseudotuberculosis serotype O:3 (strain YPIII) protein is Ion-translocating oxidoreductase complex subunit C.